We begin with the raw amino-acid sequence, 152 residues long: MEAVLNELVSVEDLKNFERKFQSEQAAGSVSKSTQFEYAWCLVRSKYNDDIRRGIVLLEELLPKGSKEEQRDYVFYLAVGNYRLKEYEKALKYVRGLLQTEPQNNQAKELERLIDKAMKKDGLVGMAIVGGMALGVAGLAGLIGLAVSKSKS.

N-acetylmethionine is present on Met-1. Residues 1–122 lie on the Cytoplasmic side of the membrane; sequence MEAVLNELVS…LIDKAMKKDG (122 aa). Ser-10 is subject to Phosphoserine. The TPR repeat unit spans residues 71-104; it reads RDYVFYLAVGNYRLKEYEKALKYVRGLLQTEPQN. The chain crosses the membrane as a helical span at residues 123-143; it reads LVGMAIVGGMALGVAGLAGLI. Topologically, residues 144-152 are mitochondrial intermembrane; the sequence is GLAVSKSKS.

It belongs to the FIS1 family. In terms of assembly, interacts with DNM1L/DLP1 through the TPR region; may form part of a larger protein complex at the endoplasmic reticulum-mitochondrial interface during mitochondrial fission. Interacts with MARCHF5. Interacts with MIEF1. Interacts with PEX11A, PEX11B and PEX11G. In terms of processing, ubiquitinated by MARCHF5.

The protein localises to the mitochondrion outer membrane. Its subcellular location is the peroxisome membrane. Its function is as follows. Involved in the fragmentation of the mitochondrial network and its perinuclear clustering. Plays a minor role in the recruitment and association of the fission mediator dynamin-related protein 1 (DNM1L) to the mitochondrial surface and mitochondrial fission. May not be essential for the assembly of functional fission complexes and the subsequent membrane scission event. Also mediates peroxisomal fission. May act when the products of fission are directed toward mitochondrial homeostasis, mitophagy, or apoptosis. Can induce cytochrome c release from the mitochondrion to the cytosol, ultimately leading to apoptosis. This is Mitochondrial fission 1 protein from Rattus norvegicus (Rat).